Here is a 130-residue protein sequence, read N- to C-terminus: MSEVDKAHLAAINKDVQANDTLFGKIIRKEIPAKIIFEDDEALAFHDVSPQAPIHFLVIPKRRIDMLENAVDSDAALIGKLMVTASKVAKQLGMANGYRVVVNNGKDGAQSVFHLHLHVLGGRQLQWPPG.

Residues 22–130 form the HIT domain; the sequence is LFGKIIRKEI…GGRQLQWPPG (109 aa). Positions 114-118 match the Histidine triad motif motif; the sequence is HLHLH.

This Caenorhabditis elegans protein is Histidine triad nucleotide-binding protein 1 (hint-1).